Consider the following 232-residue polypeptide: Large ribosomal subunit protein uL1 (232 aa).

This sequence belongs to the universal ribosomal protein uL1 family. In terms of assembly, part of the 50S ribosomal subunit.

Binds directly to 23S rRNA. The L1 stalk is quite mobile in the ribosome, and is involved in E site tRNA release. Functionally, protein L1 is also a translational repressor protein, it controls the translation of the L11 operon by binding to its mRNA. The polypeptide is Large ribosomal subunit protein uL1 (Lysinibacillus sphaericus (strain C3-41)).